A 211-amino-acid chain; its full sequence is Shikimate kinase (211 aa).

The span at 1–13 shows a compositional bias: low complexity; the sequence is MNASANLCAASAN. The interval 1–24 is disordered; sequence MNASANLCAASANDPQPGDQEAAH. 50–55 contacts ATP; the sequence is GAGKTT. Position 54 (threonine 54) interacts with Mg(2+). Substrate contacts are provided by aspartate 72, arginine 96, and glycine 118. Arginine 156 provides a ligand contact to ATP. Position 175 (arginine 175) interacts with substrate.

Belongs to the shikimate kinase family. As to quaternary structure, monomer. Mg(2+) is required as a cofactor.

It localises to the cytoplasm. The enzyme catalyses shikimate + ATP = 3-phosphoshikimate + ADP + H(+). It participates in metabolic intermediate biosynthesis; chorismate biosynthesis; chorismate from D-erythrose 4-phosphate and phosphoenolpyruvate: step 5/7. In terms of biological role, catalyzes the specific phosphorylation of the 3-hydroxyl group of shikimic acid using ATP as a cosubstrate. This Bordetella parapertussis (strain 12822 / ATCC BAA-587 / NCTC 13253) protein is Shikimate kinase.